The primary structure comprises 761 residues: Cyclin-F (761 aa).

The short motif at 19–27 (RRRIKRRPR) is the Nuclear localization signal 1 element. Positions 28 to 75 (VLTLLSLPEDVLLYVLECLPAVDILSMREVHPHLRSLVDSHSSVWARA) constitute an F-box domain. The Cyclin N-terminal domain occupies 300 to 411 (NKSSIFTTQK…EIISALEGKI (112 aa)). 2 consecutive short sequence motifs (d box) follow at residues 316-319 (RYIL) and 355-358 (RAKL). Disordered stretches follow at residues 575 to 594 (NKTK…SFVT) and 677 to 761 (AENG…SDEL). Positions 580 to 590 (RREESIQEDRG) are enriched in basic and acidic residues. The interval 589–745 (RGSFVTTPTA…LLKASRRQVK (157 aa)) is PEST. Residues 691-718 (SSGYSSVSSGGSPTSSSSPGLPFTPTPG) show a composition bias toward low complexity. Residues 739–749 (ASRRQVKRKNQ) are compositionally biased toward basic residues.

Belongs to the cyclin family. Cyclin AB subfamily. Component of the SCF(CCNF) complex.

Its subcellular location is the nucleus. The protein localises to the cytoplasm. It localises to the perinuclear region. The protein resides in the cytoskeleton. It is found in the microtubule organizing center. Its subcellular location is the centrosome. The protein localises to the centriole. Substrate recognition component of the SCF(CCNF) E3 ubiquitin-protein ligase complex which mediates the ubiquitination and subsequent proteasomal degradation of target proteins. The SCF(CCNF) E3 ubiquitin-protein ligase complex is an integral component of the ubiquitin proteasome system (UPS) and links proteasome degradation to the cell cycle. Mediates the substrate recognition and the proteasomal degradation of various target proteins during G2 phase involved in the regulation of cell cycle progression and in the maintenance of genome stability. The polypeptide is Cyclin-F (ccnf) (Xenopus laevis (African clawed frog)).